The sequence spans 314 residues: 4-hydroxy-3-methylbut-2-enyl diphosphate reductase (314 aa).

Cys12 provides a ligand contact to [4Fe-4S] cluster. (2E)-4-hydroxy-3-methylbut-2-enyl diphosphate is bound by residues His43 and His81. His43 and His81 together coordinate dimethylallyl diphosphate. Residues His43 and His81 each coordinate isopentenyl diphosphate. Cys103 lines the [4Fe-4S] cluster pocket. Residue His131 coordinates (2E)-4-hydroxy-3-methylbut-2-enyl diphosphate. His131 is a dimethylallyl diphosphate binding site. His131 serves as a coordination point for isopentenyl diphosphate. Glu133 functions as the Proton donor in the catalytic mechanism. Thr170 provides a ligand contact to (2E)-4-hydroxy-3-methylbut-2-enyl diphosphate. Cys198 is a binding site for [4Fe-4S] cluster. The (2E)-4-hydroxy-3-methylbut-2-enyl diphosphate site is built by Ser226, Asn228, and Ser271. The dimethylallyl diphosphate site is built by Ser226, Asn228, and Ser271. Isopentenyl diphosphate-binding residues include Ser226, Asn228, and Ser271.

Belongs to the IspH family. Requires [4Fe-4S] cluster as cofactor.

It carries out the reaction isopentenyl diphosphate + 2 oxidized [2Fe-2S]-[ferredoxin] + H2O = (2E)-4-hydroxy-3-methylbut-2-enyl diphosphate + 2 reduced [2Fe-2S]-[ferredoxin] + 2 H(+). It catalyses the reaction dimethylallyl diphosphate + 2 oxidized [2Fe-2S]-[ferredoxin] + H2O = (2E)-4-hydroxy-3-methylbut-2-enyl diphosphate + 2 reduced [2Fe-2S]-[ferredoxin] + 2 H(+). The protein operates within isoprenoid biosynthesis; dimethylallyl diphosphate biosynthesis; dimethylallyl diphosphate from (2E)-4-hydroxy-3-methylbutenyl diphosphate: step 1/1. Its pathway is isoprenoid biosynthesis; isopentenyl diphosphate biosynthesis via DXP pathway; isopentenyl diphosphate from 1-deoxy-D-xylulose 5-phosphate: step 6/6. Its function is as follows. Catalyzes the conversion of 1-hydroxy-2-methyl-2-(E)-butenyl 4-diphosphate (HMBPP) into a mixture of isopentenyl diphosphate (IPP) and dimethylallyl diphosphate (DMAPP). Acts in the terminal step of the DOXP/MEP pathway for isoprenoid precursor biosynthesis. The chain is 4-hydroxy-3-methylbut-2-enyl diphosphate reductase from Shouchella clausii (strain KSM-K16) (Alkalihalobacillus clausii).